The sequence spans 480 residues: NADH-quinone oxidoreductase subunit N (480 aa).

Transmembrane regions (helical) follow at residues 12–32, 41–61, 80–100, 105–125, 130–150, 165–185, 204–224, 237–257, 275–295, 300–320, 326–346, 372–392, 406–428, and 450–470; these read LLIP…LGVF, LVQW…LFLV, FSKT…MPYL, LGKI…MMMV, LIAM…LAAF, FVLG…VYGF, IGLT…VSAA, APTP…IVLL, VIWM…LTQQ, LMAY…AAAS, ALLV…ATIL, GWSM…VGFF, LMIL…LRIV, and IARI…WLVF.

The protein belongs to the complex I subunit 2 family. NDH-1 is composed of 14 different subunits. Subunits NuoA, H, J, K, L, M, N constitute the membrane sector of the complex.

The protein localises to the cell inner membrane. The enzyme catalyses a quinone + NADH + 5 H(+)(in) = a quinol + NAD(+) + 4 H(+)(out). In terms of biological role, NDH-1 shuttles electrons from NADH, via FMN and iron-sulfur (Fe-S) centers, to quinones in the respiratory chain. The immediate electron acceptor for the enzyme in this species is believed to be ubiquinone. Couples the redox reaction to proton translocation (for every two electrons transferred, four hydrogen ions are translocated across the cytoplasmic membrane), and thus conserves the redox energy in a proton gradient. The chain is NADH-quinone oxidoreductase subunit N from Maricaulis maris (strain MCS10) (Caulobacter maris).